The sequence spans 264 residues: ATP synthase subunit a (264 aa).

A run of 6 helical transmembrane segments spans residues 29–49 (TWHI…LWIF), 87–107 (NALI…MNFM), 134–154 (DVNI…YYSI), 177–197 (IPVN…SLAL), 208–228 (LIFI…SLGV), and 235–255 (LIFH…LTIV).

This sequence belongs to the ATPase A chain family. As to quaternary structure, F-type ATPases have 2 components, CF(1) - the catalytic core - and CF(0) - the membrane proton channel. CF(1) has five subunits: alpha(3), beta(3), gamma(1), delta(1), epsilon(1). CF(0) has three main subunits: a(1), b(2) and c(9-12). The alpha and beta chains form an alternating ring which encloses part of the gamma chain. CF(1) is attached to CF(0) by a central stalk formed by the gamma and epsilon chains, while a peripheral stalk is formed by the delta and b chains.

It localises to the cell inner membrane. In terms of biological role, key component of the proton channel; it plays a direct role in the translocation of protons across the membrane. This is ATP synthase subunit a from Shewanella sp. (strain MR-4).